The sequence spans 151 residues: Ribosomal RNA large subunit methyltransferase H (151 aa).

S-adenosyl-L-methionine-binding positions include Gly100 and 119-124 (LSKMTF).

It belongs to the RNA methyltransferase RlmH family. As to quaternary structure, homodimer.

The protein localises to the cytoplasm. It catalyses the reaction pseudouridine(1915) in 23S rRNA + S-adenosyl-L-methionine = N(3)-methylpseudouridine(1915) in 23S rRNA + S-adenosyl-L-homocysteine + H(+). In terms of biological role, specifically methylates the pseudouridine at position 1915 (m3Psi1915) in 23S rRNA. The protein is Ribosomal RNA large subunit methyltransferase H of Thermotoga sp. (strain RQ2).